Reading from the N-terminus, the 366-residue chain is Sodium-potassium/proton antiporter ChaA (366 aa).

Topologically, residues 1-16 (MSNAQEAVKTRHKETS) are cytoplasmic. The next 2 helical transmembrane spans lie at 17–37 (LIFP…QTLP) and 38–58 (VVIA…FSVV). The Cytoplasmic portion of the chain corresponds to 59 to 74 (RHADVLAHRLGEPYGS). A helical transmembrane segment spans residues 75 to 95 (LILSLSVVILEVSLISALMAT). Residues 96-106 (GDAAPTLMRDT) are Periplasmic-facing. The chain crosses the membrane as a helical span at residues 107–127 (LYSIIMIVTGGLVGFSLLLGG). Topologically, residues 128–143 (RKFATQYMNLFGIKQY) are cytoplasmic. A helical membrane pass occupies residues 144–164 (LIALFPLAIIVLVFPMALPAA). Residues 165–167 (NFS) lie on the Periplasmic side of the membrane. The helical transmembrane segment at 168–188 (TGQALLVALISAAMYGVFLLI) threads the bilayer. The Cytoplasmic segment spans residues 189-216 (QTKTHQSLFVYEHEDDSDDDDPHHGKPS). Residues 217–237 (AHSSLWHAIWLIIHLIAVIAV) traverse the membrane as a helical segment. At 238 to 255 (TKMNASSLETLLDSMNAP) the chain is on the periplasmic side. The chain crosses the membrane as a helical span at residues 256-276 (VAFTGFLVALLILSPEGLGAL). Residues 277–290 (KAVLNNQVQRAMNL) lie on the Cytoplasmic side of the membrane. Residues 291–311 (FFGSVLATISLTVPVVTLIAF) traverse the membrane as a helical segment. The Periplasmic segment spans residues 312 to 318 (MTGNELQ). The helical transmembrane segment at 319 to 339 (FALGAPEMVVMVASLVLCHIS) threads the bilayer. The Cytoplasmic segment spans residues 340 to 345 (FSTGRT). A helical transmembrane segment spans residues 346-366 (NVLNGAAHLALFAAYLMTIFA).

This sequence belongs to the Ca(2+):cation antiporter (CaCA) (TC 2.A.19) family.

It is found in the cell inner membrane. It catalyses the reaction Na(+)(in) + H(+)(out) = Na(+)(out) + H(+)(in). The enzyme catalyses K(+)(in) + H(+)(out) = K(+)(out) + H(+)(in). The catalysed reaction is Ca(2+)(in) + H(+)(out) = Ca(2+)(out) + H(+)(in). With respect to regulation, pronounced pH dependence with sodium as substrate. Ca(2+)/H(+) and Na(+)/H(+) antiporter activities are both inhibited by magnesium. Ca(2+)/H(+) activity is inhibited by the proton ionophore carbonyl cyanide m-chlorophenylhydrazone (CCCP). Its function is as follows. Sodium exporter that functions mainly at alkaline pH. Can also function as a potassium/proton and calcium/proton antiporter at alkaline pH. Does not play a major role in calcium export. The K(+)/H(+) antiporter activity may enable E.coli to adapt to K(+) salinity stress and to maintain K(+) homeostasis. This Escherichia coli (strain K12) protein is Sodium-potassium/proton antiporter ChaA.